The sequence spans 84 residues: Small ribosomal subunit protein bS18A (84 aa).

The protein belongs to the bacterial ribosomal protein bS18 family. Part of the 30S ribosomal subunit. Forms a tight heterodimer with protein bS6.

Binds as a heterodimer with protein bS6 to the central domain of the 16S rRNA, where it helps stabilize the platform of the 30S subunit. This chain is Small ribosomal subunit protein bS18A, found in Mycolicibacterium paratuberculosis (strain ATCC BAA-968 / K-10) (Mycobacterium paratuberculosis).